The following is a 223-amino-acid chain: MKRTKSIHHASFRKSWSARHLTPVALAVTAVFMLAGCEKSDDTVSLYQNADDCSAANPGKSAECTTAYNNALKEAERTAPKYATREDCVAEFGEGQCQQAPAQAGMAPENQAQAQQSSGSFWMPLMAGYMMGRLMGGGAGFAQQPLFSSKNPASPAYGKYTDAAGKNYGAAQPGRTMTVPKTAMAPKPATTTTVTRGGFGESVAKQSTMQRSAAGTSTRSMGG.

The span at 178 to 195 (TVPKTAMAPKPATTTTVT) shows a compositional bias: low complexity. Residues 178–223 (TVPKTAMAPKPATTTTVTRGGFGESVAKQSTMQRSAAGTSTRSMGG) are disordered. Positions 204–223 (AKQSTMQRSAAGTSTRSMGG) are enriched in polar residues.

Belongs to the UPF0441 family.

The chain is UPF0441 protein YgiB from Salmonella enteritidis PT4 (strain P125109).